The following is a 129-amino-acid chain: Small ribosomal subunit protein uS11c (129 aa).

This sequence belongs to the universal ribosomal protein uS11 family. Part of the 30S ribosomal subunit.

The protein localises to the plastid. It is found in the chloroplast. The chain is Small ribosomal subunit protein uS11c from Pleurastrum terricola (Filamentous green alga).